The chain runs to 351 residues: Protein RecA (351 aa).

Gly-68–Thr-75 lines the ATP pocket.

This sequence belongs to the RecA family.

It localises to the cytoplasm. Functionally, can catalyze the hydrolysis of ATP in the presence of single-stranded DNA, the ATP-dependent uptake of single-stranded DNA by duplex DNA, and the ATP-dependent hybridization of homologous single-stranded DNAs. It interacts with LexA causing its activation and leading to its autocatalytic cleavage. The chain is Protein RecA from Chloroflexus aurantiacus (strain ATCC 29364 / DSM 637 / Y-400-fl).